The following is a 422-amino-acid chain: Serine--tRNA ligase (422 aa).

Residue 229-231 (TAE) participates in L-serine binding. 260–262 (RKE) is an ATP binding site. Glutamate 283 is an L-serine binding site. 347–350 (EISS) contacts ATP. Residue serine 383 coordinates L-serine.

This sequence belongs to the class-II aminoacyl-tRNA synthetase family. Type-1 seryl-tRNA synthetase subfamily. Homodimer. The tRNA molecule binds across the dimer.

The protein resides in the cytoplasm. It carries out the reaction tRNA(Ser) + L-serine + ATP = L-seryl-tRNA(Ser) + AMP + diphosphate + H(+). The catalysed reaction is tRNA(Sec) + L-serine + ATP = L-seryl-tRNA(Sec) + AMP + diphosphate + H(+). The protein operates within aminoacyl-tRNA biosynthesis; selenocysteinyl-tRNA(Sec) biosynthesis; L-seryl-tRNA(Sec) from L-serine and tRNA(Sec): step 1/1. Functionally, catalyzes the attachment of serine to tRNA(Ser). Is also able to aminoacylate tRNA(Sec) with serine, to form the misacylated tRNA L-seryl-tRNA(Sec), which will be further converted into selenocysteinyl-tRNA(Sec). This Geobacter sulfurreducens (strain ATCC 51573 / DSM 12127 / PCA) protein is Serine--tRNA ligase.